Here is a 91-residue protein sequence, read N- to C-terminus: Probable Fe(2+)-trafficking protein (91 aa).

This sequence belongs to the Fe(2+)-trafficking protein family.

Functionally, could be a mediator in iron transactions between iron acquisition and iron-requiring processes, such as synthesis and/or repair of Fe-S clusters in biosynthetic enzymes. This chain is Probable Fe(2+)-trafficking protein, found in Burkholderia ambifaria (strain MC40-6).